A 173-amino-acid polypeptide reads, in one-letter code: MVYFMFIMLVGLILGLMAVASNPSPYFAALGLVVAAGVGCGLLVGHGGSFLSLVLFLIYLGGMLVVFAYTAALAAEPYPETWGDWSVLLYVSVYLLGIFFVGKYFFKEWGGLGWVGVEEMSNLEMIRGDFGGVALLYANGGIMLVLGGWVLLLTLFVILELTRGLSYGTLRVV.

The next 5 membrane-spanning stretches (helical) occupy residues Met-1–Ser-21, Pro-25–Gly-45, Leu-53–Leu-73, Trp-82–Gly-102, and Gly-141–Leu-161.

It belongs to the complex I subunit 6 family.

Its subcellular location is the mitochondrion membrane. The catalysed reaction is a ubiquinone + NADH + 5 H(+)(in) = a ubiquinol + NAD(+) + 4 H(+)(out). Functionally, core subunit of the mitochondrial membrane respiratory chain NADH dehydrogenase (Complex I) that is believed to belong to the minimal assembly required for catalysis. Complex I functions in the transfer of electrons from NADH to the respiratory chain. The immediate electron acceptor for the enzyme is believed to be ubiquinone. In Squalus acanthias (Spiny dogfish), this protein is NADH-ubiquinone oxidoreductase chain 6 (MT-ND6).